A 275-amino-acid chain; its full sequence is MMNKICLYLPLFFSSLTMANEPVERVISLAPHATEIAYAAGLGDKLIAVSEMSDYPKEAGELEKVSNYQGIKLERIIALQPDLVIAWPAGNPAKELEKLKQFGVPIYYSTTGTLEDIANNIEQLSQYSDDPSKGQKAARDFREELTALKAKYNTTEKVRYFYQLSEKPIITVAGKNWPSEVFNFCGGENVFANTAAPYPQVSIEQVITRQPEVLFTSRHAMSDDGMWAQWKNELPALRNNHVWSLNSDWINRPTPRTLNAIIEVCEHFESVKRKR.

A signal peptide spans 1–19 (MMNKICLYLPLFFSSLTMA). Residues 25–272 (RVISLAPHAT…EVCEHFESVK (248 aa)) enclose the Fe/B12 periplasmic-binding domain. A disulfide bridge links Cys-185 with Cys-265.

It belongs to the BtuF family. The complex is composed of two ATP-binding proteins (BtuD), two transmembrane proteins (BtuC) and a solute-binding protein (BtuF).

The protein localises to the periplasm. Its function is as follows. Part of the ABC transporter complex BtuCDF involved in vitamin B12 import. Binds vitamin B12 and delivers it to the periplasmic surface of BtuC. The protein is Vitamin B12-binding protein of Vibrio parahaemolyticus serotype O3:K6 (strain RIMD 2210633).